Reading from the N-terminus, the 105-residue chain is Small ribosomal subunit protein uS10 (105 aa).

Belongs to the universal ribosomal protein uS10 family. Part of the 30S ribosomal subunit.

Its function is as follows. Involved in the binding of tRNA to the ribosomes. This chain is Small ribosomal subunit protein uS10, found in Rickettsia akari (strain Hartford).